We begin with the raw amino-acid sequence, 399 residues long: Forkhead box protein A4-A (399 aa).

A DNA-binding region (fork-head) is located at residues 119–213 (KPPYSYISLI…ENGCYLRRQK (95 aa)). Basic and acidic residues predominate over residues 219-234 (RSKSGEGEKKVNKPGE). A disordered region spans residues 219 to 290 (RSKSGEGEKK…VGLSPTSEQA (72 aa)). A compositionally biased stretch (polar residues) spans 267 to 277 (STGSSIHQACG).

In terms of tissue distribution, during stages 8.5 to 10, expressed in the part of the dorsal mesoderm invaginating the dorsal blastopore lip (Spemann organizer), as a direct response to dorsal mesodermal induction. At stage 12 (mid-gastrulation), restricted to the dorsal midline in the deeper layers of mesodermal cells. Continuously present in the posterior portion of invaginated mesoderm and expressed within the notochord. Also present in the midline of the neural plate during gastrulation, but absent from the notoplate in exogastrula embryos. Expression in the notochord continues in neurula-stage embryos and at stage 20 in addition to the notochord, expression is seen in the pharyngeal endoderm.

The protein localises to the nucleus. Transcriptional repressor involved in embryonic nervous system development. Plays a role in the induction and patterning of the anterior-posterior neural axis. Involved in the establishment of floor plate differentiation from neural plate cells during gastrulation. Binds the anf1 promoter sequence to restrict expression of anf1 to the anterior of the neural plate, thereby patterning the forebrain. Can bind to the HNF-3-alpha DNA target sequence. Cooperates with t/bra in a dose-dependent manner to specify dorsal mesoderm formation, including notochord. Binds to DNA via the target sequence 5'-[GA]TAAA[TC]A-3', with 5'-GTAAATA-3' being the preferred binding site. This Xenopus laevis (African clawed frog) protein is Forkhead box protein A4-A (foxa4-a).